An 828-amino-acid polypeptide reads, in one-letter code: Isethionate sulfite-lyase (828 aa).

A PFL domain is found at 30 to 698; it reads ERVFTILESF…VVSATPNGRK (669 aa). Residues Arg-187, Gln-191, 466–468, and Arg-676 contribute to the 2-hydroxyethane-1-sulfonate site; that span reads CTE. The active-site Cysteine radical intermediate is Cys-466. Glu-468 acts as the Proton acceptor in catalysis. Positions 705 to 828 constitute a Glycine radical domain; the sequence is DGSSASHGAD…LIARTGHDVM (124 aa). Gly-803 is subject to Glycine radical.

It belongs to the glycyl radical enzyme (GRE) family. Homodimer. Requires the activating protein IseH to generate the key active site glycyl radical on Gly-803 that is involved in catalysis.

It catalyses the reaction 2-hydroxyethane-1-sulfonate = acetaldehyde + sulfite + H(+). The protein operates within organosulfur degradation; alkanesulfonate degradation. Involved in an anaerobic respiration pathway that converts the sulfonate isethionate (2-hydroxyethanesulfonate) to ammonia, acetate and sulfide. Catalyzes the radical-mediated C-S bond cleavage of isethionate (2-hydroxyethanesulfonate) to form sulfite and acetaldehyde. Shows no activity with taurine or ethanolamine as substrates. This is Isethionate sulfite-lyase from Nitratidesulfovibrio vulgaris (strain ATCC 29579 / DSM 644 / CCUG 34227 / NCIMB 8303 / VKM B-1760 / Hildenborough) (Desulfovibrio vulgaris).